A 188-amino-acid polypeptide reads, in one-letter code: Elongation factor P (188 aa).

Belongs to the elongation factor P family.

Its subcellular location is the cytoplasm. Its pathway is protein biosynthesis; polypeptide chain elongation. Its function is as follows. Involved in peptide bond synthesis. Stimulates efficient translation and peptide-bond synthesis on native or reconstituted 70S ribosomes in vitro. Probably functions indirectly by altering the affinity of the ribosome for aminoacyl-tRNA, thus increasing their reactivity as acceptors for peptidyl transferase. This is Elongation factor P from Chloroherpeton thalassium (strain ATCC 35110 / GB-78).